The chain runs to 95 residues: Translation initiation factor 1A (95 aa).

Positions 6 to 80 (SRKNLRMPEE…EKADITWRYE (75 aa)) constitute an S1-like domain.

The protein belongs to the eIF-1A family.

In terms of biological role, seems to be required for maximal rate of protein biosynthesis. Enhances ribosome dissociation into subunits and stabilizes the binding of the initiator Met-tRNA(I) to 40 S ribosomal subunits. This chain is Translation initiation factor 1A, found in Haloarcula marismortui (strain ATCC 43049 / DSM 3752 / JCM 8966 / VKM B-1809) (Halobacterium marismortui).